The primary structure comprises 469 residues: Glutamine synthetase (469 aa).

The region spanning 15-96 is the GS beta-grasp domain; the sequence is EDVKFVDVRF…INFFIHDPIT (82 aa). Residues 104–469 enclose the GS catalytic domain; sequence PRNVAKKAEA…PHEFEMYFDV (366 aa). Mg(2+)-binding residues include glutamate 129 and glutamate 131. Glutamate 205 is a binding site for ATP. Positions 210 and 218 each coordinate Mg(2+). 221–223 lines the ATP pocket; it reads YKF. L-glutamate contacts are provided by residues 262-263 and glycine 263; that span reads NG. Histidine 267 provides a ligand contact to Mg(2+). Residues 269–271 and serine 271 each bind ATP; that span reads HQS. Arginine 320, glutamate 326, and arginine 338 together coordinate L-glutamate. ATP-binding residues include arginine 338, arginine 343, and lysine 352. Glutamate 357 contacts Mg(2+). Position 359 (arginine 359) interacts with L-glutamate. The residue at position 397 (tyrosine 397) is an O-AMP-tyrosine.

The protein belongs to the glutamine synthetase family. As to quaternary structure, oligomer of 12 subunits arranged in the form of two hexagons. The cofactor is Mg(2+).

The protein localises to the cytoplasm. It carries out the reaction L-glutamate + NH4(+) + ATP = L-glutamine + ADP + phosphate + H(+). Its activity is regulated as follows. The activity of this enzyme could be controlled by adenylation under conditions of abundant glutamine. In terms of biological role, catalyzes the ATP-dependent biosynthesis of glutamine from glutamate and ammonia. Complements L-glutamine auxotrophy of an E.coli glnA mutant. The polypeptide is Glutamine synthetase (Streptomyces coelicolor (strain ATCC BAA-471 / A3(2) / M145)).